The primary structure comprises 273 residues: NADPH-dependent 7-cyano-7-deazaguanine reductase (273 aa).

81-83 (VES) is a substrate binding site. 83 to 84 (SK) provides a ligand contact to NADPH. Catalysis depends on C179, which acts as the Thioimide intermediate. D186 serves as the catalytic Proton donor. Residue 218 to 219 (AE) coordinates substrate. 247 to 248 (RG) contributes to the NADPH binding site.

This sequence belongs to the GTP cyclohydrolase I family. QueF type 2 subfamily. Homodimer.

It localises to the cytoplasm. It catalyses the reaction 7-aminomethyl-7-carbaguanine + 2 NADP(+) = 7-cyano-7-deazaguanine + 2 NADPH + 3 H(+). It participates in tRNA modification; tRNA-queuosine biosynthesis. Functionally, catalyzes the NADPH-dependent reduction of 7-cyano-7-deazaguanine (preQ0) to 7-aminomethyl-7-deazaguanine (preQ1). The chain is NADPH-dependent 7-cyano-7-deazaguanine reductase from Rickettsia akari (strain Hartford).